The sequence spans 349 residues: N-formyl peptide receptor 3 (349 aa).

Residues 1–27 lie on the Extracellular side of the membrane; it reads METNFSIPLNETEEVLPEPAGHTVLWI. Asn4 and Asn10 each carry an N-linked (GlcNAc...) asparagine glycan. The helical transmembrane segment at 28–50 threads the bilayer; that stretch reads FSLLVHGVTFVFGVLGNGLVIWV. The Cytoplasmic portion of the chain corresponds to 51–61; that stretch reads AGFRMTRTVNT. Residues 62–83 traverse the membrane as a helical segment; it reads ICYLNLALADFSFSAILPFRMV. The Extracellular segment spans residues 84-100; it reads SVAMREKWPFGSFLCKL. A disulfide bridge connects residues Cys98 and Cys176. The chain crosses the membrane as a helical span at residues 101–121; that stretch reads VHVMIDINLFVSVYLITIIAL. The Cytoplasmic segment spans residues 122–140; it reads DRCICVLHPAWAQNHRTMS. Residues 141–162 form a helical membrane-spanning segment; sequence LAKRVMTGLWILTIVLTLPNFI. Residues 163-205 are Extracellular-facing; sequence FWTTIRTTNGDTYCIFNFAFWGDTAVERLNVFITMAKVFLILH. A helical membrane pass occupies residues 206 to 226; sequence FIIGFSMPMSIITVCYGIIAA. The Cytoplasmic segment spans residues 227 to 242; that stretch reads KIHRNHMIKSSRPLRV. The chain crosses the membrane as a helical span at residues 243–266; that stretch reads FAAVVASFFICWFPYELIGILMAV. At 267 to 286 the chain is on the extracellular side; that stretch reads WLKEMLLNGKYKIILVLINP. A helical transmembrane segment spans residues 287–306; sequence TSSLAFFNSCLNPILYVFMG. Over 307-349 the chain is Cytoplasmic; the sequence is RNFQERLIRSLPTSLERALTEVPDSAQTSNTHTTSASPPEETE. The segment at 327 to 349 is disordered; the sequence is EVPDSAQTSNTHTTSASPPEETE. The span at 331 to 343 shows a compositional bias: polar residues; that stretch reads SAQTSNTHTTSAS.

This sequence belongs to the G-protein coupled receptor 1 family.

Its subcellular location is the cell membrane. Its function is as follows. Low affinity receptor for N-formyl-methionyl peptides, which are powerful neutrophils chemotactic factors. Binding of FMLP to the receptor causes activation of neutrophils. This response is mediated via a G-protein that activates a phosphatidylinositol-calcium second messenger system. This Pan troglodytes (Chimpanzee) protein is N-formyl peptide receptor 3 (FPR3).